A 337-amino-acid polypeptide reads, in one-letter code: Adenine deaminase (337 aa).

Zn(2+) is bound by residues H14, H16, and H194. Catalysis depends on E197, which acts as the Proton donor. Residue D275 participates in Zn(2+) binding. Substrate is bound at residue D276.

This sequence belongs to the metallo-dependent hydrolases superfamily. Adenosine and AMP deaminases family. Adenine deaminase type 2 subfamily. Zn(2+) is required as a cofactor.

It carries out the reaction adenine + H2O + H(+) = hypoxanthine + NH4(+). In terms of biological role, catalyzes the hydrolytic deamination of adenine to hypoxanthine. Plays an important role in the purine salvage pathway and in nitrogen catabolism. This is Adenine deaminase from Vibrio parahaemolyticus serotype O3:K6 (strain RIMD 2210633).